We begin with the raw amino-acid sequence, 396 residues long: MANDYLFTSESVSEGHPDKVADQISDAILDAILAQDKYSRVAAETLCNTGLVVLAGEITTTANVDYIQVARNTIKRIGYDNTDYGIDYRGCAVLVAYDKQSPDIAQGVDRAHDNNLDQGAGDQGLMFGYACEETPELMPLPIHLSHRLVERQANLRRDGRLPWLRPDAKSQVTVRYVDGKPHSIDTVVLSTQHSPDIDLGTLREAVIEEVIKPTLPADLIKGDIKFLVNPTGRFVIGGPQGDCGLTGRKIIVDTYGGAAPHGGGAFSGKDPSKVDRSAAYAGRYVAKNIVAAGLASRCLIQVSYAIGVAQPTSVMVNTFGTGRVSDAVITRLVQEHFDLRPKGIIQMLDLLRPIYEKSAAYGHFGREEPEFTWESTDKALALAEAAGTEPVAALAE.

ATP is bound at residue H16. Residue D18 coordinates Mg(2+). E44 contributes to the K(+) binding site. The L-methionine site is built by E57 and Q100. The segment at 100–110 (QSPDIAQGVDR) is flexible loop. ATP contacts are provided by residues 167–169 (DAK), 233–234 (RF), D242, 248–249 (RK), A265, and K269. Position 242 (D242) interacts with L-methionine. K273 is an L-methionine binding site.

This sequence belongs to the AdoMet synthase family. In terms of assembly, homotetramer; dimer of dimers. Requires Mg(2+) as cofactor. It depends on K(+) as a cofactor.

The protein localises to the cytoplasm. The catalysed reaction is L-methionine + ATP + H2O = S-adenosyl-L-methionine + phosphate + diphosphate. It functions in the pathway amino-acid biosynthesis; S-adenosyl-L-methionine biosynthesis; S-adenosyl-L-methionine from L-methionine: step 1/1. Functionally, catalyzes the formation of S-adenosylmethionine (AdoMet) from methionine and ATP. The overall synthetic reaction is composed of two sequential steps, AdoMet formation and the subsequent tripolyphosphate hydrolysis which occurs prior to release of AdoMet from the enzyme. The polypeptide is S-adenosylmethionine synthase (Paraburkholderia xenovorans (strain LB400)).